We begin with the raw amino-acid sequence, 333 residues long: MTSKSHWKLLALALVLVVVMVWYSISREDRYIEFFYFPISEKKEPCFQGEAERQASKIFGNRSREQPIFLQLKDYFWVKTPSTYELPFGTKGSEDLLLRVLAITSYSIPESIKSLECRRCVVVGNGHRLRNSSLGGVINKYDVVIRLNNAPVAGYEGDVGSKTTIRLFYPESAHFDPKIENNPDTLLVLVAFKAMDFHWIETILSDKKRVRKGFWKQPPLIWDVNPKQVRILNPFFMEIAADKLLSLPIQQPRKIKQKPTTGLLAITLALHLCDLVHIAGFGYPDASNKKQTIHYYEQITLKSMAGSGHNVSQEAIAIKRMLEMGAVKNLTYF.

The Cytoplasmic portion of the chain corresponds to 1–8 (MTSKSHWK). The helical; Signal-anchor for type II membrane protein transmembrane segment at 9 to 26 (LLALALVLVVVMVWYSIS) threads the bilayer. Residues 27–333 (REDRYIEFFY…MGAVKNLTYF (307 aa)) are Lumenal-facing. 4 N-linked (GlcNAc...) asparagine glycosylation sites follow: Asn-61, Asn-131, Asn-310, and Asn-329. An intrachain disulfide couples Cys-120 to Cys-273.

It belongs to the glycosyltransferase 29 family. As to expression, broadly expressed among tissues with highest levels in the small intestine and colon.

It is found in the golgi apparatus. Its subcellular location is the golgi stack membrane. It carries out the reaction a beta-D-galactosyl-(1-&gt;3)-N-acetyl-beta-D-galactosaminyl derivative + CMP-N-acetyl-beta-neuraminate = an N-acetyl-alpha-neuraminyl-(2-&gt;3)-beta-D-galactosyl-(1-&gt;3)-N-acetyl-beta-D-galactosaminyl derivative + CMP + H(+). It catalyses the reaction a beta-D-galactosyl-(1-&gt;3)-N-acetyl-alpha-D-galactosaminyl derivative + CMP-N-acetyl-beta-neuraminate = an N-acetyl-alpha-neuraminyl-(2-&gt;3)-beta-D-galactosyl-(1-&gt;3)-N-acetyl-alpha-D-galactosaminyl derivative + CMP + H(+). The enzyme catalyses a beta-D-galactosyl-(1-&gt;4)-N-acetyl-beta-D-glucosaminyl derivative + CMP-N-acetyl-beta-neuraminate = an N-acetyl-alpha-neuraminyl-(2-&gt;3)-beta-D-galactosyl-(1-&gt;4)-N-acetyl-beta-D-glucosaminyl derivative + CMP + H(+). The catalysed reaction is a ganglioside GM1 (d18:1(4E)) + CMP-N-acetyl-beta-neuraminate = a ganglioside GD1a (d18:1(4E)) + CMP + H(+). It carries out the reaction a ganglioside GA1 (d18:1(4E)) + CMP-N-acetyl-beta-neuraminate = a ganglioside GM1b (d18:1(4E)) + CMP + H(+). It catalyses the reaction a ganglioside GT1c (d18:1(4E)) + CMP-N-acetyl-beta-neuraminate = a ganglioside GQ1c (d18:1(4E)) + CMP + H(+). The enzyme catalyses a neolactoside nLc4Cer + CMP-N-acetyl-beta-neuraminate = a neolactoside IV(3)-alpha-NeuAc-nLc4Cer + CMP + H(+). The catalysed reaction is a neolactoside nLc4Cer(d18:1(4E)) + CMP-N-acetyl-beta-neuraminate = a neolactoside IV(3)-alpha-NeuAc-nLc4Cer(d18:1(4E)) + CMP + H(+). The protein operates within protein modification; protein glycosylation. Functionally, a beta-galactoside alpha2-3 sialyltransferase involved in terminal sialylation of glycoproteins and glycolipids. Catalyzes the transfer of sialic acid (N-acetyl-neuraminic acid; Neu5Ac) from the nucleotide sugar donor CMP-Neu5Ac onto acceptor Galbeta-(1-&gt;3)-GalNAc- and Galbeta-(1-&gt;4)-GlcNAc-terminated glycoconjugates through an alpha2-3 linkage. Plays a major role in hemostasis. Responsible for sialylation of plasma VWF/von Willebrand factor, preventing its recognition by asialoglycoprotein receptors (ASGPR) and subsequent clearance. Regulates ASGPR-mediated clearance of platelets. Participates in the biosynthesis of the sialyl Lewis X epitopes, both on O- and N-glycans, which are recognized by SELE/E-selectin, SELP/P-selectin and SELL/L-selectin. Essential for selectin-mediated rolling and adhesion of leukocytes during extravasation. Contributes to adhesion and transendothelial migration of neutrophils likely through terminal sialylation of CXCR2. In glycosphingolipid biosynthesis, sialylates GM1 and GA1 gangliosides to form GD1a and GM1b, respectively. Metabolizes brain c-series ganglioside GT1c forming GQ1c. Synthesizes ganglioside LM1 (IV3Neu5Ac-nLc4Cer), a major structural component of peripheral nerve myelin. The chain is CMP-N-acetylneuraminate-beta-galactosamide-alpha-2,3-sialyltransferase 4 (St3gal4) from Mus musculus (Mouse).